A 103-amino-acid chain; its full sequence is Histone H4 (103 aa).

The span at 1-14 (MSGRGKGGKGLGKG) shows a compositional bias: gly residues. Residues 1-20 (MSGRGKGGKGLGKGGAKRHR) are disordered. Ser-2 carries the post-translational modification N-acetylserine. N6-acetyl-N6-methyllysine; alternate is present on residues Lys-6 and Lys-13. The DNA-binding element occupies 17-21 (KRHRK). Lys-21 is modified (N6-methyllysine).

The protein belongs to the histone H4 family. The nucleosome is a histone octamer containing two molecules each of H2A, H2B, H3 and H4 assembled in one H3-H4 heterotetramer and two H2A-H2B heterodimers. The octamer wraps approximately 147 bp of DNA.

Its subcellular location is the nucleus. The protein resides in the chromosome. Its function is as follows. Core component of nucleosome. Nucleosomes wrap and compact DNA into chromatin, limiting DNA accessibility to the cellular machineries which require DNA as a template. Histones thereby play a central role in transcription regulation, DNA repair, DNA replication and chromosomal stability. DNA accessibility is regulated via a complex set of post-translational modifications of histones, also called histone code, and nucleosome remodeling. The polypeptide is Histone H4 (Solaster stimpsoni (Striped sun sea star)).